The following is a 706-amino-acid chain: DNA ligase (706 aa).

Residues 48–52 (DAAYD), 97–98 (SL), and E131 contribute to the NAD(+) site. Catalysis depends on K133, which acts as the N6-AMP-lysine intermediate. The NAD(+) site is built by R154, E191, K307, and K331. The Zn(2+) site is built by C425, C428, C443, and C449. One can recognise a BRCT domain in the interval 628-706 (RADSAVAGKT…EDEWLKLIEG (79 aa)).

Belongs to the NAD-dependent DNA ligase family. LigA subfamily. Mg(2+) serves as cofactor. Mn(2+) is required as a cofactor.

The catalysed reaction is NAD(+) + (deoxyribonucleotide)n-3'-hydroxyl + 5'-phospho-(deoxyribonucleotide)m = (deoxyribonucleotide)n+m + AMP + beta-nicotinamide D-nucleotide.. Functionally, DNA ligase that catalyzes the formation of phosphodiester linkages between 5'-phosphoryl and 3'-hydroxyl groups in double-stranded DNA using NAD as a coenzyme and as the energy source for the reaction. It is essential for DNA replication and repair of damaged DNA. This Afipia carboxidovorans (strain ATCC 49405 / DSM 1227 / KCTC 32145 / OM5) (Oligotropha carboxidovorans) protein is DNA ligase.